A 482-amino-acid polypeptide reads, in one-letter code: Glutamyl-tRNA(Gln) amidotransferase subunit A (482 aa).

Active-site charge relay system residues include K80 and S159. The Acyl-ester intermediate role is filled by S183.

Belongs to the amidase family. GatA subfamily. In terms of assembly, heterotrimer of A, B and C subunits.

It catalyses the reaction L-glutamyl-tRNA(Gln) + L-glutamine + ATP + H2O = L-glutaminyl-tRNA(Gln) + L-glutamate + ADP + phosphate + H(+). Functionally, allows the formation of correctly charged Gln-tRNA(Gln) through the transamidation of misacylated Glu-tRNA(Gln) in organisms which lack glutaminyl-tRNA synthetase. The reaction takes place in the presence of glutamine and ATP through an activated gamma-phospho-Glu-tRNA(Gln). The chain is Glutamyl-tRNA(Gln) amidotransferase subunit A from Neorickettsia sennetsu (strain ATCC VR-367 / Miyayama) (Ehrlichia sennetsu).